Consider the following 327-residue polypeptide: Interleukin-12 subunit beta (327 aa).

The signal sequence occupies residues 1-22 (MCLQQLVISWVSLVWLASPLLA). The Ig-like C2-type domain maps to 23 to 106 (IWELEKNVYV…LSQMLLLLHK (84 aa)). A disulfide bond links Cys-50 and Cys-90. 2 N-linked (GlcNAc...) asparagine glycosylation sites follow: Asn-134 and Asn-152. The Fibronectin type-III domain maps to 237–327 (PPKNLKMKPS…WSEWATMSCP (91 aa)).

The protein belongs to the IL-12B family. In terms of assembly, heterodimer with IL12A; disulfide-linked. The heterodimer is known as interleukin IL-12. Heterodimer with IL23A; disulfide-linked. The heterodimer is known as interleukin IL-23. Also secreted as a monomer. Interacts with NBR1; this interaction promotes IL-12 secretion.

The protein localises to the secreted. Functionally, cytokine that can act as a growth factor for activated T and NK cells, enhance the lytic activity of NK/lymphokine-activated killer cells, and stimulate the production of IFN-gamma by resting PBMC. Associates with IL23A to form the IL-23 interleukin, a heterodimeric cytokine which functions in innate and adaptive immunity. IL-23 may constitute with IL-17 an acute response to infection in peripheral tissues. IL-23 binds to a heterodimeric receptor complex composed of IL12RB1 and IL23R, activates the Jak-Stat signaling cascade, stimulates memory rather than naive T-cells and promotes production of pro-inflammatory cytokines. IL-23 induces autoimmune inflammation and thus may be responsible for autoimmune inflammatory diseases and may be important for tumorigenesis. This chain is Interleukin-12 subunit beta (IL12B), found in Marmota monax (Woodchuck).